Here is a 759-residue protein sequence, read N- to C-terminus: Tripartite motif-containing protein 46 (759 aa).

The required for proximal axon localization, axon formation and migration stretch occupies residues 1–166; the sequence is MAEGEDMQTF…VERYRQSVSV (166 aa). The segment at 33–59 adopts an RING-type 1; degenerate zinc-finger fold; the sequence is CPVCQEMYKQPLVLPCTHNVCQACARE. The tract at residues 67-98 is disordered; that stretch reads IGHGGDPSSEPTSPASTPSTRSPRLSRRTLPK. The segment covering 73 to 89 has biased composition (low complexity); the sequence is PSSEPTSPASTPSTRSP. The RING-type 2; degenerate zinc-finger motif lies at 172–231; that stretch reads CQLCKPPPLEATKGCSECRATFCNECFKLFHPWGTQKAQHEPTLPTLSFRPKGLMCPDHK. Residues 222–263 form a B box-type zinc finger; it reads PKGLMCPDHKEEVTHYCKTCQRLVCQLCRVRRTHSGHKITPV. Residues C227, H230, C249, and H255 each contribute to the Zn(2+) site. A coiled-coil region spans residues 294–400; it reads ELEETIRHTE…RATEALQTFR (107 aa). The residue at position 330 (S330) is a Phosphoserine. The COS domain occupies 370-427; it reads LKETDQPCFVQAAKQLHNRIARATEALQTFRPAASSSFRHCQLDVGREMKLLTELNFL. The tract at residues 411 to 429 is required for microtubule association, proximal axon localization and axon formation; it reads QLDVGREMKLLTELNFLRV. Residues 429-528 form the Fibronectin type-III domain; it reads VPEAPVIDTQ…EDVHLHTPPA (100 aa). In terms of domain architecture, B30.2/SPRY spans 513-747; sequence GYGEYSEDVH…LQEPVGTKPE (235 aa). The residue at position 627 (S627) is a Phosphoserine.

It belongs to the TRIM/RBCC family. In terms of assembly, interacts with TUBB3 and TUBA4A. As to expression, expressed in primary hippocampal and cortical neurons.

Its subcellular location is the cell projection. The protein resides in the axon. It localises to the cytoplasm. The protein localises to the cytoskeleton. Microtubule-associated protein that is involved in the formation of parallel microtubule bundles linked by cross-bridges in the proximal axon. Required for the uniform orientation and maintenance of the parallel microtubule fascicles, which are important for efficient cargo delivery and trafficking in axons. Thereby also required for proper axon specification, the establishment of neuronal polarity and proper neuronal migration. The chain is Tripartite motif-containing protein 46 from Rattus norvegicus (Rat).